The sequence spans 69 residues: DNA-directed RNA polymerase subunit epsilon (69 aa).

This sequence belongs to the RNA polymerase subunit epsilon family. In terms of assembly, RNAP is composed of a core of 2 alpha, a beta and a beta' subunit. The core is associated with a delta subunit, and at least one of epsilon or omega. When a sigma factor is associated with the core the holoenzyme is formed, which can initiate transcription.

The enzyme catalyses RNA(n) + a ribonucleoside 5'-triphosphate = RNA(n+1) + diphosphate. Its function is as follows. A non-essential component of RNA polymerase (RNAP). The sequence is that of DNA-directed RNA polymerase subunit epsilon from Listeria welshimeri serovar 6b (strain ATCC 35897 / DSM 20650 / CCUG 15529 / CIP 8149 / NCTC 11857 / SLCC 5334 / V8).